The primary structure comprises 444 residues: Phosphoglucosamine mutase (444 aa).

Ser101 acts as the Phosphoserine intermediate in catalysis. Positions 101, 240, 242, and 244 each coordinate Mg(2+). Ser101 carries the post-translational modification Phosphoserine.

This sequence belongs to the phosphohexose mutase family. The cofactor is Mg(2+). In terms of processing, activated by phosphorylation.

It carries out the reaction alpha-D-glucosamine 1-phosphate = D-glucosamine 6-phosphate. Its function is as follows. Catalyzes the conversion of glucosamine-6-phosphate to glucosamine-1-phosphate. The sequence is that of Phosphoglucosamine mutase from Aeromonas salmonicida (strain A449).